The sequence spans 610 residues: F-box/LRR-repeat protein 4 (610 aa).

Positions 5–52 constitute an F-box domain; the sequence is DRINNCLPEELILEIFRRLESKPNRDACSLVCKRWLSLERFSRTTLRI. LRR repeat units lie at residues 53–79, 124–149, 150–175, 178–200, 201–227, 228–253, 256–277, 278–303, 304–329, 330–355, 356–381, 382–407, 408–433, 434–459, 460–484, 485–510, 511–536, 537–562, and 563–588; these read GASF…HVDE, SSSL…SLIW, CPNV…DLQG, VGDQ…NLRF, CEGL…GVAA, SAKI…YLDS, IHDK…LKLQ, CVSV…ALYS, FQHF…TLSD, CYFV…EING, CHNI…ALLY, CQRI…HLVD, CSGI…HIRR, CYEI…SLRF, CDKV…NVSG, CNQI…DISV, LQNI…VLSH, CHHI…HMVY, and CPGI…LIEK. Positions 88–125 are disordered; the sequence is LSPSPKRKRGRDSSSPSSSKRKKLTDKTHSGAENVESS.

The chain is F-box/LRR-repeat protein 4 (FBL4) from Arabidopsis thaliana (Mouse-ear cress).